We begin with the raw amino-acid sequence, 592 residues long: Aspartate--tRNA(Asp/Asn) ligase (592 aa).

Glu-176 contacts L-aspartate. Positions 200–203 are aspartate; it reads QLYK. Position 222 (Arg-222) interacts with L-aspartate. ATP is bound by residues 222-224 and Gln-231; that span reads RDE. His-452 lines the L-aspartate pocket. Glu-486 is a binding site for ATP. Residue Arg-493 coordinates L-aspartate. 538-541 contacts ATP; that stretch reads GVDR.

It belongs to the class-II aminoacyl-tRNA synthetase family. Type 1 subfamily. Homodimer.

It localises to the cytoplasm. The catalysed reaction is tRNA(Asx) + L-aspartate + ATP = L-aspartyl-tRNA(Asx) + AMP + diphosphate. Its function is as follows. Aspartyl-tRNA synthetase with relaxed tRNA specificity since it is able to aspartylate not only its cognate tRNA(Asp) but also tRNA(Asn). Reaction proceeds in two steps: L-aspartate is first activated by ATP to form Asp-AMP and then transferred to the acceptor end of tRNA(Asp/Asn). The polypeptide is Aspartate--tRNA(Asp/Asn) ligase (Rhodopirellula baltica (strain DSM 10527 / NCIMB 13988 / SH1)).